A 57-amino-acid polypeptide reads, in one-letter code: Large ribosomal subunit protein bL32 (57 aa).

It belongs to the bacterial ribosomal protein bL32 family.

The protein is Large ribosomal subunit protein bL32 of Halothermothrix orenii (strain H 168 / OCM 544 / DSM 9562).